The sequence spans 158 residues: 2-C-methyl-D-erythritol 2,4-cyclodiphosphate synthase (158 aa).

A divalent metal cation-binding residues include aspartate 9 and histidine 11. 4-CDP-2-C-methyl-D-erythritol 2-phosphate contacts are provided by residues aspartate 9 to histidine 11 and histidine 35 to serine 36. A divalent metal cation is bound at residue histidine 43. 4-CDP-2-C-methyl-D-erythritol 2-phosphate is bound by residues aspartate 57–glycine 59 and arginine 143.

Belongs to the IspF family. As to quaternary structure, homotrimer. The cofactor is a divalent metal cation.

It carries out the reaction 4-CDP-2-C-methyl-D-erythritol 2-phosphate = 2-C-methyl-D-erythritol 2,4-cyclic diphosphate + CMP. It participates in isoprenoid biosynthesis; isopentenyl diphosphate biosynthesis via DXP pathway; isopentenyl diphosphate from 1-deoxy-D-xylulose 5-phosphate: step 4/6. Its function is as follows. Involved in the biosynthesis of isopentenyl diphosphate (IPP) and dimethylallyl diphosphate (DMAPP), two major building blocks of isoprenoid compounds. Catalyzes the conversion of 4-diphosphocytidyl-2-C-methyl-D-erythritol 2-phosphate (CDP-ME2P) to 2-C-methyl-D-erythritol 2,4-cyclodiphosphate (ME-CPP) with a corresponding release of cytidine 5-monophosphate (CMP). The sequence is that of 2-C-methyl-D-erythritol 2,4-cyclodiphosphate synthase from Chromobacterium violaceum (strain ATCC 12472 / DSM 30191 / JCM 1249 / CCUG 213 / NBRC 12614 / NCIMB 9131 / NCTC 9757 / MK).